Reading from the N-terminus, the 287-residue chain is Inorganic pyrophosphatase (287 aa).

R79 is a binding site for diphosphate. D116, D121, and D153 together coordinate Mg(2+).

Belongs to the PPase family. It depends on Mg(2+) as a cofactor.

Its subcellular location is the cytoplasm. It catalyses the reaction diphosphate + H2O = 2 phosphate + H(+). The polypeptide is Inorganic pyrophosphatase (IPP1) (Eremothecium gossypii (strain ATCC 10895 / CBS 109.51 / FGSC 9923 / NRRL Y-1056) (Yeast)).